The chain runs to 1749 residues: E3 ubiquitin-protein ligase UBR1 (1749 aa).

The residue at position 2 (A2) is an N-acetylalanine. A Phosphothreonine modification is found at T21. Residues 97-168 (QLCGRVFKSG…TGPFCVNHEP (72 aa)) form a UBR-type zinc finger. Residues C99, C112, C115, C124, C127, H133, and H136 each contribute to the Zn(2+) site. F148 contributes to the a peptide binding site. A Zn(2+)-binding site is contributed by C149. Position 150 (D150) interacts with a peptide. C151 is a Zn(2+) binding site. Position 153 (D153) interacts with a peptide. Zn(2+) is bound by residues C163 and H166. The disordered stretch occupies residues 842 to 868 (QHSKAEHMQKKRRKQENKDEALPPPPP). The tract at residues 1019–1054 (RKRKAEAARLHRQKIMAQMSALQKNFIETHKLMYDN) is UBC2-binding region (U2BR). Zn(2+) is bound by residues C1098, C1101, C1159, H1161, H1164, and C1167. The RING-type; atypical zinc-finger motif lies at 1098 to 1201 (CILCQEEQEV…SGEYLCPLCK (104 aa)). Residue S1179 is modified to Phosphoserine. The Zn(2+) site is built by C1197, C1200, C1627, C1630, and C1653.

This sequence belongs to the E3 ubiquitin-protein ligase UBR1-like family. In terms of assembly, interacts with RECQL4. As to expression, broadly expressed, with highest levels in skeletal muscle, kidney and pancreas. Present in acinar cells of the pancreas (at protein level).

It localises to the cytoplasm. Its subcellular location is the cytosol. The catalysed reaction is S-ubiquitinyl-[E2 ubiquitin-conjugating enzyme]-L-cysteine + [acceptor protein]-L-lysine = [E2 ubiquitin-conjugating enzyme]-L-cysteine + N(6)-ubiquitinyl-[acceptor protein]-L-lysine.. It participates in protein modification; protein ubiquitination. Inhibited by the small-molecule compound RF-C11, which bears two heterovalent ligands: RF-C11 inhibits activity toward both type-1 and type-2 N-degrons. In terms of biological role, E3 ubiquitin-protein ligase which is a component of the N-end rule pathway. Recognizes and binds proteins bearing specific N-terminal residues that are destabilizing according to the N-end rule, leading to their ubiquitination and subsequent degradation. Recognizes both type-1 and type-2 N-degrons, containing positively charged amino acids (Arg, Lys and His) and bulky and hydrophobic amino acids, respectively. Does not ubiquitinate proteins that are acetylated at the N-terminus. In contrast, it strongly binds methylated N-degrons. Binds leucine and is a negative regulator of the leucine-mTOR signaling pathway, thereby controlling cell growth. The sequence is that of E3 ubiquitin-protein ligase UBR1 from Homo sapiens (Human).